We begin with the raw amino-acid sequence, 277 residues long: Polyamine aminopropyltransferase (277 aa).

The 234-residue stretch at 2–235 (ELWFTENQDE…SLWTFTMGSK (234 aa)) folds into the PABS domain. Position 31 (Gln31) interacts with S-methyl-5'-thioadenosine. Positions 62 and 86 each coordinate spermidine. Residues Glu106 and 137-138 (DG) contribute to the S-methyl-5'-thioadenosine site. The active-site Proton acceptor is the Asp155. 155-158 (DSTD) serves as a coordination point for spermidine. Pro162 contributes to the S-methyl-5'-thioadenosine binding site.

Belongs to the spermidine/spermine synthase family. As to quaternary structure, homodimer or homotetramer.

The protein resides in the cytoplasm. It catalyses the reaction S-adenosyl 3-(methylsulfanyl)propylamine + putrescine = S-methyl-5'-thioadenosine + spermidine + H(+). It participates in amine and polyamine biosynthesis; spermidine biosynthesis; spermidine from putrescine: step 1/1. In terms of biological role, catalyzes the irreversible transfer of a propylamine group from the amino donor S-adenosylmethioninamine (decarboxy-AdoMet) to putrescine (1,4-diaminobutane) to yield spermidine. This Thermoanaerobacter pseudethanolicus (strain ATCC 33223 / 39E) (Clostridium thermohydrosulfuricum) protein is Polyamine aminopropyltransferase.